The primary structure comprises 330 residues: Glycerol-3-phosphate dehydrogenase [NAD(P)+] (330 aa).

The NADPH site is built by Ser10, Trp11, Arg31, and Lys105. Residues Lys105, Gly135, and Ser137 each coordinate sn-glycerol 3-phosphate. NADPH is bound at residue Ala139. Sn-glycerol 3-phosphate-binding residues include Lys190, Asp243, Ser253, Arg254, and Asn255. Residue Lys190 is the Proton acceptor of the active site. Arg254 is an NADPH binding site. NADPH-binding residues include Val278 and Glu280.

It belongs to the NAD-dependent glycerol-3-phosphate dehydrogenase family.

The protein localises to the cytoplasm. It carries out the reaction sn-glycerol 3-phosphate + NAD(+) = dihydroxyacetone phosphate + NADH + H(+). The enzyme catalyses sn-glycerol 3-phosphate + NADP(+) = dihydroxyacetone phosphate + NADPH + H(+). Its pathway is membrane lipid metabolism; glycerophospholipid metabolism. In terms of biological role, catalyzes the reduction of the glycolytic intermediate dihydroxyacetone phosphate (DHAP) to sn-glycerol 3-phosphate (G3P), the key precursor for phospholipid synthesis. This chain is Glycerol-3-phosphate dehydrogenase [NAD(P)+], found in Solidesulfovibrio magneticus (strain ATCC 700980 / DSM 13731 / RS-1) (Desulfovibrio magneticus).